The chain runs to 333 residues: Thiamine-monophosphate kinase (333 aa).

Residues Asp-35, Thr-50, and Asp-51 each coordinate Mg(2+). His-58 contributes to the substrate binding site. Asp-80 is a Mg(2+) binding site. ATP is bound by residues Tyr-111, 128 to 129, and Arg-153; that span reads GD. Asp-129 lines the Mg(2+) pocket. Mg(2+) is bound at residue Asp-230. Ser-232 contributes to the ATP binding site. Asp-233 contacts Mg(2+). Substrate contacts are provided by Glu-278 and Phe-330.

The protein belongs to the thiamine-monophosphate kinase family.

The catalysed reaction is thiamine phosphate + ATP = thiamine diphosphate + ADP. The protein operates within cofactor biosynthesis; thiamine diphosphate biosynthesis; thiamine diphosphate from thiamine phosphate: step 1/1. In terms of biological role, catalyzes the ATP-dependent phosphorylation of thiamine-monophosphate (TMP) to form thiamine-pyrophosphate (TPP), the active form of vitamin B1. The sequence is that of Thiamine-monophosphate kinase from Prochlorococcus marinus (strain SARG / CCMP1375 / SS120).